A 323-amino-acid polypeptide reads, in one-letter code: Di/tripeptide transport ATP-binding protein DppF (323 aa).

The region spanning 5–254 is the ABC transporter domain; the sequence is LTARDLTRHY…PLHPYTRALL (250 aa). ATP is bound at residue 47-54; sequence GESGCGKS.

Belongs to the ABC transporter superfamily. As to quaternary structure, the complex is composed of two ATP-binding proteins (DppD and DppF), two transmembrane proteins (DppB and DppC) and a solute-binding protein (DppA1-A5). Five orthologous SBPs (DppA1-A5) are present in P.aeruginosa, which increases the substrate specificity of the DppBCDF transporter.

It is found in the cell inner membrane. The enzyme catalyses a dipeptide(out) + ATP + H2O = a dipeptide(in) + ADP + phosphate + H(+). Functionally, part of the ABC transporter DppABCDF involved in the uptake of various di/tripeptides. Is also involved in the uptake of phaseolotoxin, a toxic tripeptide inhibiting the enzyme ornithine carbamoyltransferase. Responsible for energy coupling to the transport system. The sequence is that of Di/tripeptide transport ATP-binding protein DppF from Pseudomonas aeruginosa (strain UCBPP-PA14).